The following is a 107-amino-acid chain: Heme-degrading monooxygenase (107 aa).

The region spanning 2–94 (IIVTNTAKIT…YILDNKISYY (93 aa)) is the ABM domain. N6 contributes to the Fe cation binding site. H76 is a heme binding site.

This sequence belongs to the antibiotic biosynthesis monooxygenase family. Heme-degrading monooxygenase IsdG subfamily. Homodimer.

The protein localises to the cytoplasm. The catalysed reaction is heme b + 3 reduced [NADPH--hemoprotein reductase] + 3 O2 = biliverdin IXalpha + CO + Fe(2+) + 3 oxidized [NADPH--hemoprotein reductase] + 3 H2O + H(+). Functionally, allows bacterial pathogens to use the host heme as an iron source. Catalyzes the oxidative degradation of the heme macrocyclic porphyrin ring to the biliverdin in the presence of a suitable electron donor such as ascorbate or NADPH--cytochrome P450 reductase, with subsequent release of free iron. The sequence is that of Heme-degrading monooxygenase from Bacillus cereus (strain AH187).